Reading from the N-terminus, the 966-residue chain is Aminopeptidase N (966 aa).

Topologically, residues 1–8 (MAKGFYIS) are cytoplasmic. The helical; Signal-anchor for type II membrane protein transmembrane segment at 9–32 (KTLGILGILLGVAAVCTIIALSVV) threads the bilayer. The tract at residues 33-68 (YAQEKNRNAENSATAPTLPGSTSATTATTTPAVDES) is cytosolic Ser/Thr-rich junction. The Extracellular segment spans residues 33–966 (YAQEKNRNAE…VFKWFTENSS (934 aa)). The segment at 42 to 64 (ENSATAPTLPGSTSATTATTTPA) is disordered. The segment covering 44-64 (SATAPTLPGSTSATTATTTPA) has biased composition (low complexity). The segment at 69 to 966 (KPWNQYRLPK…VFKWFTENSS (898 aa)) is metalloprotease. N-linked (GlcNAc...) asparagine glycans are attached at residues asparagine 106, asparagine 114, and asparagine 128. Residue tyrosine 176 is modified to Sulfotyrosine. Residues asparagine 234, asparagine 288, asparagine 318, and asparagine 332 are each glycosylated (N-linked (GlcNAc...) asparagine). 351–355 (GAMEN) serves as a coordination point for substrate. Zn(2+) is bound at residue histidine 387. Residue glutamate 388 is the Proton acceptor of the active site. 2 residues coordinate Zn(2+): histidine 391 and glutamate 410. Sulfotyrosine is present on residues tyrosine 418 and tyrosine 423. N-linked (GlcNAc...) asparagine glycans are attached at residues asparagine 573, asparagine 606, asparagine 624, and asparagine 734. A disulfide bridge links cysteine 760 with cysteine 767. N-linked (GlcNAc...) asparagine glycosylation is found at asparagine 784 and asparagine 817. Cysteine 797 and cysteine 833 are oxidised to a cystine. Tyrosine 852 carries the phosphotyrosine modification.

The protein belongs to the peptidase M1 family. As to quaternary structure, homodimer. Interacts with SLC6A19. Zn(2+) serves as cofactor. In terms of processing, N- and O-glycosylated. Sulfated. Post-translationally, may undergo proteolysis and give rise to a soluble form. Expressed in the intestinal brush border (at protein level). Highly expressed in intestinal tract and kidney, present in liver, lymph node, spleen, and brain. Found as well in monocytes, macrophages, dendritic cells, veiled cells and B-cells but not on T-cells and thymocytes.

It localises to the cell membrane. It carries out the reaction Release of an N-terminal amino acid, Xaa-|-Yaa- from a peptide, amide or arylamide. Xaa is preferably Ala, but may be most amino acids including Pro (slow action). When a terminal hydrophobic residue is followed by a prolyl residue, the two may be released as an intact Xaa-Pro dipeptide.. Broad specificity aminopeptidase which plays a role in the final digestion of peptides generated from hydrolysis of proteins by gastric and pancreatic proteases. Also involved in the processing of various peptides including peptide hormones, such as angiotensin III and IV, neuropeptides, and chemokines. May also be involved the cleavage of peptides bound to major histocompatibility complex class II molecules of antigen presenting cells. May have a role in angiogenesis and promote cholesterol crystallization. May have a role in amino acid transport by acting as binding partner of amino acid transporter SLC6A19 and regulating its activity. The protein is Aminopeptidase N (Anpep) of Mus musculus (Mouse).